Consider the following 1387-residue polypeptide: Regulator of G-protein signaling 12 (1387 aa).

The PDZ domain maps to 21 to 97; sequence SVEVARGRAG…GVLRMVISEG (77 aa). Residues Ser171 and Ser194 each carry the phosphoserine modification. A Glycyl lysine isopeptide (Lys-Gly) (interchain with G-Cter in SUMO2) cross-link involves residue Lys195. The 113-residue stretch at 227–339 folds into the PID domain; the sequence is VAMVVGYLGS…GALRTSCHVF (113 aa). Disordered stretches follow at residues 409–428 and 442–488; these read ADAH…IGNF and LGGG…PLET. Positions 412–428 are enriched in polar residues; the sequence is HQNNSTSSNSDSGIGNF. 2 positions are modified to omega-N-methylarginine: Arg524 and Arg633. The disordered stretch occupies residues 620-650; that stretch reads RKTKEDKKSSKLGRGVALAQTSQRTSARRSF. Phosphoserine is present on residues Ser661 and Ser671. Residues 715-832 form the RGS domain; sequence SFERLLQDPV…LKSQLYQECV (118 aa). The interval 842-934 is disordered; the sequence is PDSQQVPSSP…ANGGLCRRES (93 aa). The segment covering 849–869 has biased composition (low complexity); it reads SSPASKHSISSDHSNVSTPKK. A phosphoserine mark is found at Ser850 and Ser879. The segment covering 914 to 923 has biased composition (basic and acidic residues); sequence DHGDHAHDAL. A Phosphoserine modification is found at Ser943. 2 consecutive RBD domains span residues 962 to 1032 and 1034 to 1104; these read KHCC…LGKR and LFRL…LEER. A compositionally biased stretch (basic and acidic residues) spans 1103 to 1117; sequence ERDPSRGKVSTEKQK. Residues 1103–1168 form a disordered region; it reads ERDPSRGKVS…ARDPRLSKRE (66 aa). The span at 1122–1133 shows a compositional bias: polar residues; sequence KQSSAVNSSPRN. Over residues 1151-1168 the composition is skewed to basic and acidic residues; the sequence is IRGENGKSARDPRLSKRE. Positions 1187–1209 constitute a GoLoco domain; that stretch reads AEEFFELISKAQSNRADDQRGLL. Disordered stretches follow at residues 1224 to 1325 and 1349 to 1387; these read PGSS…EGTT and ADLT…TSRF. Positions 1261 to 1280 are enriched in low complexity; that stretch reads SDSPATSPASAQSPCSAYSP. The span at 1315-1325 shows a compositional bias: polar residues; it reads SCISTVQEGTT. A compositionally biased stretch (pro residues) spans 1367 to 1380; that stretch reads LPPPPLPQDTPGPT.

Interacts with GNAI1, GNAI2 and GNAI3; the interactions are GDP-dependent. Detected in brain cortex GABAergic neurons, in striatum and substantia nigra, and in the Purkinje cell layer in the cerebellum and hippocampus (at protein level). Expressed at high levels in brain and lung and lower levels in testis, heart, and spleen.

It is found in the nucleus. Its subcellular location is the cytoplasm. The protein localises to the cell projection. The protein resides in the dendrite. It localises to the synapse. Regulates G protein-coupled receptor signaling cascades. Inhibits signal transduction by increasing the GTPase activity of G protein alpha subunits, thereby driving them into their inactive GDP-bound form. In Rattus norvegicus (Rat), this protein is Regulator of G-protein signaling 12 (Rgs12).